The following is a 481-amino-acid chain: Delta(14)-sterol reductase ERG24B (481 aa).

Helical transmembrane passes span 11-31 (FGGPLGATGIVFGLPILMQVL), 80-100 (LFAYYFLSLMLYRIMPAQIVL), 125-145 (LTGCAIGTYIYGANFPVWTWI), 149-169 (YIQLLTTSTVLTYIISIWTYL), 244-264 (TYGFVSDSIVVIALIQAYYVL), 279-299 (ITSDGLGFMLTWGDIVWVPFL), 313-333 (HLGPIGVGAIGTVFCIGLYIF), and 427-447 (AAPWGMLFTYLYSAWFGFLLI).

This sequence belongs to the ERG4/ERG24 family.

It is found in the endoplasmic reticulum membrane. The catalysed reaction is 4,4-dimethyl-5alpha-cholesta-8,24-dien-3beta-ol + NADP(+) = 4,4-dimethyl-5alpha-cholesta-8,14,24-trien-3beta-ol + NADPH + H(+). It participates in steroid metabolism; ergosterol biosynthesis. Delta(14)-sterol reductase; part of the third module of ergosterol biosynthesis pathway that includes the late steps of the pathway. Catalyzes the reduction of the C14=C15 double bond within 4,4,24-trimethyl ergosta-8,14,24(28)-trienolto produce 4,4-dimethylfecosterol. The third module or late pathway involves the ergosterol synthesis itself through consecutive reactions that mainly occur in the endoplasmic reticulum (ER) membrane. Firstly, the squalene synthase ERG9 catalyzes the condensation of 2 farnesyl pyrophosphate moieties to form squalene, which is the precursor of all steroids. Squalene synthase is crucial for balancing the incorporation of farnesyl diphosphate (FPP) into sterol and nonsterol isoprene synthesis. Secondly, squalene is converted into lanosterol by the consecutive action of the squalene epoxidase ERG1 and the lanosterol synthase ERG7. Then, the delta(24)-sterol C-methyltransferase ERG6 methylates lanosterol at C-24 to produce eburicol. Eburicol is the substrate of the sterol 14-alpha demethylase encoded by CYP51A, CYP51B and CYP51C, to yield 4,4,24-trimethyl ergosta-8,14,24(28)-trienol. CYP51B encodes the enzyme primarily responsible for sterol 14-alpha-demethylation, and plays an essential role in ascospore formation. CYP51A encodes an additional sterol 14-alpha-demethylase, induced on ergosterol depletion and responsible for the intrinsic variation in azole sensitivity. The third CYP51 isoform, CYP51C, does not encode a sterol 14-alpha-demethylase, but is required for full virulence on host wheat ears. The C-14 reductase ERG24 then reduces the C14=C15 double bond which leads to 4,4-dimethylfecosterol. A sequence of further demethylations at C-4, involving the C-4 demethylation complex containing the C-4 methylsterol oxidases ERG25, the sterol-4-alpha-carboxylate 3-dehydrogenase ERG26 and the 3-keto-steroid reductase ERG27, leads to the production of fecosterol via 4-methylfecosterol. ERG28 has a role as a scaffold to help anchor ERG25, ERG26 and ERG27 to the endoplasmic reticulum. The C-8 sterol isomerase ERG2 then catalyzes the reaction which results in unsaturation at C-7 in the B ring of sterols and thus converts fecosterol to episterol. The sterol-C5-desaturases ERG3A and ERG3BB then catalyze the introduction of a C-5 double bond in the B ring to produce 5-dehydroepisterol. The C-22 sterol desaturases ERG5A and ERG5B further convert 5-dehydroepisterol into ergosta-5,7,22,24(28)-tetraen-3beta-ol by forming the C-22(23) double bond in the sterol side chain. Finally, ergosta-5,7,22,24(28)-tetraen-3beta-ol is substrate of the C-24(28) sterol reductase ERG4 to produce ergosterol. The polypeptide is Delta(14)-sterol reductase ERG24B (Gibberella zeae (strain ATCC MYA-4620 / CBS 123657 / FGSC 9075 / NRRL 31084 / PH-1) (Wheat head blight fungus)).